The sequence spans 911 residues: Protein argonaute 4B (911 aa).

Disordered stretches follow at residues M1 to L51 and K149 to R171. The 116-residue stretch at P281–P396 folds into the PAZ domain. The Piwi domain maps to F565 to K872.

Belongs to the argonaute family. Ago subfamily.

Probably involved in the RNA silencing pathway. May bind to short RNAs such as microRNAs (miRNAs) or short interfering RNAs (siRNAs), and represses the translation of mRNAs which are complementary to them. The protein is Protein argonaute 4B (AGO4B) of Oryza sativa subsp. japonica (Rice).